We begin with the raw amino-acid sequence, 156 residues long: Small ribosomal subunit protein uS7 (156 aa).

It belongs to the universal ribosomal protein uS7 family. As to quaternary structure, part of the 30S ribosomal subunit. Contacts proteins S9 and S11.

Functionally, one of the primary rRNA binding proteins, it binds directly to 16S rRNA where it nucleates assembly of the head domain of the 30S subunit. Is located at the subunit interface close to the decoding center, probably blocks exit of the E-site tRNA. The chain is Small ribosomal subunit protein uS7 from Pelotomaculum thermopropionicum (strain DSM 13744 / JCM 10971 / SI).